The sequence spans 207 residues: Large ribosomal subunit protein uL4 (207 aa).

The interval 44–71 is disordered; sequence RRQGTQSAKTRAEVRGGGRKPWKQKGTG. The segment covering 60 to 71 has biased composition (basic residues); sequence GGRKPWKQKGTG.

The protein belongs to the universal ribosomal protein uL4 family. In terms of assembly, part of the 50S ribosomal subunit.

In terms of biological role, one of the primary rRNA binding proteins, this protein initially binds near the 5'-end of the 23S rRNA. It is important during the early stages of 50S assembly. It makes multiple contacts with different domains of the 23S rRNA in the assembled 50S subunit and ribosome. Its function is as follows. Forms part of the polypeptide exit tunnel. The polypeptide is Large ribosomal subunit protein uL4 (Alkaliphilus oremlandii (strain OhILAs) (Clostridium oremlandii (strain OhILAs))).